We begin with the raw amino-acid sequence, 202 residues long: LexA repressor (202 aa).

The H-T-H motif DNA-binding region spans 28 to 48; sequence RAEIAQQLGFRSPNAAEEHLK. Catalysis depends on for autocatalytic cleavage activity residues S119 and K156.

Belongs to the peptidase S24 family. In terms of assembly, homodimer.

It carries out the reaction Hydrolysis of Ala-|-Gly bond in repressor LexA.. Functionally, represses a number of genes involved in the response to DNA damage (SOS response), including recA and lexA. In the presence of single-stranded DNA, RecA interacts with LexA causing an autocatalytic cleavage which disrupts the DNA-binding part of LexA, leading to derepression of the SOS regulon and eventually DNA repair. This chain is LexA repressor, found in Pectobacterium atrosepticum (strain SCRI 1043 / ATCC BAA-672) (Erwinia carotovora subsp. atroseptica).